A 417-amino-acid chain; its full sequence is MEFVKCLGHPEEFYNLVRFRIGGKRKVMPKMDQDSLSSSLKTCYKYLNQTSRSFAAVIQALDGEMRNAVCIFYLVLRALDTLEDDMTISVEKKVPLLHNFHSFLYQPDWRFMESKEKDRQVLEDFPTISLEFRNLAEKYQTVIADICRRMGIGMAEFLDKHVTSEQEWDKYCHYVAGLVGIGLSRLFSASEFEDPLVGEDTERANSMGLFLQKTNIIRDYLEDQQGGREFWPQEVWSRYVKKLGDFAKPENIDLAVQCLNELITNALHHIPDVITYLSRLRNQSVFNFCAIPQVMAIATLAACYNNQQVFKGAVKIRKGQAVTLMMDATNMPAVKAIIYQYMEEIYHRIPDSDPSSSKTRQIISTIRTQNLPNCQLISRSHYSPIYLSFVMLLAALSWQYLTTLSQVTEDYVQTGEH.

NADP(+) is bound by residues arginine 52 and arginine 77. Residues aspartate 80, glutamate 83, and aspartate 84 each coordinate Mg(2+). Residue arginine 218 participates in NADP(+) binding. The helical transmembrane segment at 284–304 (SVFNFCAIPQVMAIATLAACY) threads the bilayer. Positions 315 and 317 each coordinate NADP(+). The helical transmembrane segment at 384 to 404 (PIYLSFVMLLAALSWQYLTTL) threads the bilayer.

Belongs to the phytoene/squalene synthase family. Mg(2+) serves as cofactor. As to expression, widely expressed.

The protein resides in the endoplasmic reticulum membrane. The enzyme catalyses 2 (2E,6E)-farnesyl diphosphate + NADPH + H(+) = squalene + 2 diphosphate + NADP(+). It catalyses the reaction 2 (2E,6E)-farnesyl diphosphate + NADH + H(+) = squalene + 2 diphosphate + NAD(+). The catalysed reaction is 2 (2E,6E)-farnesyl diphosphate = presqualene diphosphate + diphosphate. It carries out the reaction presqualene diphosphate + NADH + H(+) = squalene + diphosphate + NAD(+). The enzyme catalyses presqualene diphosphate + NADPH + H(+) = squalene + diphosphate + NADP(+). It functions in the pathway terpene metabolism; lanosterol biosynthesis; lanosterol from farnesyl diphosphate: step 1/3. In terms of biological role, catalyzes the condensation of 2 farnesyl pyrophosphate (FPP) moieties to form squalene. Proceeds in two distinct steps. In the first half-reaction, two molecules of FPP react to form the stable presqualene diphosphate intermediate (PSQPP), with concomitant release of a proton and a molecule of inorganic diphosphate. In the second half-reaction, PSQPP undergoes heterolysis, isomerization, and reduction with NADPH or NADH to form squalene. It is the first committed enzyme of the sterol biosynthesis pathway. This chain is Squalene synthase (FDFT1), found in Homo sapiens (Human).